Consider the following 273-residue polypeptide: Protein FAM210A (273 aa).

Positions 95 to 116 are disordered; the sequence is VLSSSSTSQETPSEKKEEPDPL. The segment covering 106-116 has biased composition (basic and acidic residues); that stretch reads PSEKKEEPDPL. The DUF1279 domain occupies 118 to 230; that stretch reads DKSISLYQRF…GYMSTPPPVK (113 aa). The helical transmembrane segment at 138–158 threads the bilayer; sequence LIPVHLITSGIWFGTFYYASI. The stretch at 233 to 272 forms a coiled coil; that stretch reads LQGRMEETKELISEKMEETKDRLTEKLQETKEKVSFKKKV. The segment at 247–273 is disordered; it reads KMEETKDRLTEKLQETKEKVSFKKKVE.

The protein belongs to the FAM210 family. Interacts with ATAD3A.

The protein localises to the membrane. It localises to the mitochondrion. It is found in the cytoplasm. May play a role in the structure and strength of both muscle and bone. The polypeptide is Protein FAM210A (Fam210a) (Rattus norvegicus (Rat)).